The chain runs to 203 residues: Methyltransferase-like 26 (203 aa).

This sequence belongs to the UPF0585 family.

The chain is Methyltransferase-like 26 from Xenopus tropicalis (Western clawed frog).